The primary structure comprises 509 residues: 5-OH-xanthotoxin synthase (509 aa).

The chain crosses the membrane as a helical span at residues 5 to 25; that stretch reads AVVILLILAFPIASVYVLFYH. The interval 368–373 is substrate specificity; it reads TGALLI. C449 serves as a coordination point for heme.

This sequence belongs to the cytochrome P450 family. Heme serves as cofactor.

The protein resides in the microsome membrane. The enzyme catalyses xanthotoxin + reduced [NADPH--hemoprotein reductase] + O2 = 5-hydroxyxanthotoxin + oxidized [NADPH--hemoprotein reductase] + H2O + 2 H(+). The protein operates within secondary metabolite biosynthesis. Involved in the biosynthesis of coumarins and furanocoumarins (FCs), natural products required for defense responses against attacks by predators with potential medical and agroindustrial usages such as anticoagulant, rodenticide and artificial vanilla substitutes. Catalyzes the conversion of xanthotoxin into 5-hydroxyxanthotoxin. The chain is 5-OH-xanthotoxin synthase from Ammi majus (Bishop's weed).